We begin with the raw amino-acid sequence, 623 residues long: AFI1-like protein C776.06c (623 aa).

Positions 5–204 constitute a uDENN domain; the sequence is DYLLTAIFDP…IDNIPKPGSE (200 aa). One can recognise a cDENN domain in the interval 248–386; it reads ISNLINTFID…SDATTTMDTK (139 aa). Residues 388–476 form the dDENN domain; that stretch reads LFNNTSPFTP…WSWDNDDEKV (89 aa).

Belongs to the AFI1/mesA family.

It localises to the cytoplasm. It is found in the cell cortex. Its subcellular location is the nucleus. Its function is as follows. Involved in polarity establishment. The sequence is that of AFI1-like protein C776.06c from Schizosaccharomyces pombe (strain 972 / ATCC 24843) (Fission yeast).